Reading from the N-terminus, the 284-residue chain is Avenin-like b9 (284 aa).

The N-terminal stretch at 1-18 (MKVFILALLALAATTAIA) is a signal peptide.

This sequence belongs to the prolamin family. In terms of processing, contains disulfide bonds.

In terms of biological role, seed storage protein. Might be integrated via inter-chain disulfide bonds within the glutenin polymer. The sequence is that of Avenin-like b9 from Triticum aestivum (Wheat).